We begin with the raw amino-acid sequence, 1059 residues long: Mitogen-activated protein kinase kinase kinase mlk-1 (1059 aa).

Residues methionine 1–proline 66 are disordered. The span at aspartate 38 to serine 48 shows a compositional bias: low complexity. Residues arginine 69–tyrosine 130 form the SH3 domain. Residues threonine 150 to alanine 454 form the Protein kinase domain. ATP is bound by residues isoleucine 156–valine 164 and lysine 193. Positions alanine 199 to asparagine 224 form a coiled coil. Aspartate 297 acts as the Proton acceptor in catalysis. Serine 355 carries the phosphoserine; by max-2 and tpa-1 modification. Disordered stretches follow at residues proline 617–arginine 699 and arginine 714–aspartate 808. A compositionally biased stretch (polar residues) spans methionine 623–aspartate 633. Composition is skewed to basic and acidic residues over residues aspartate 639–lysine 648 and asparagine 662–alanine 674. Positions serine 678–serine 689 are enriched in low complexity. Over residues asparagine 690–arginine 699 the composition is skewed to polar residues. Residues arginine 749 to proline 759 are compositionally biased toward basic and acidic residues. Composition is skewed to polar residues over residues leucine 774 to asparagine 790 and serine 798 to aspartate 808. Positions asparagine 937–tyrosine 940 match the NPQY motif motif. Phosphotyrosine is present on tyrosine 940.

Belongs to the protein kinase superfamily. STE Ser/Thr protein kinase family. MAP kinase kinase kinase subfamily. In terms of assembly, interacts with max-2; the interaction is independent of max-2 and mlk-1 kinase activities. May interact (via NPQY motif when phosphorylated on tyrosine residue) with shc-1 (via PID domain); the interaction may facilitate mek-1 phosphorylation by bringing mlk-1 and mek-1 together. Interacts with svh-2 (via cytoplasmic domain). Interacts with tpa-1. It depends on Mg(2+) as a cofactor. In terms of processing, may be phosphorylated on tyrosine residues by svh-2. Post-translationally, may be ubiquitinated and targeted for proteasomal degradation by E3 ubiquitin ligase rpm-1. As to expression, expressed in pharynx, intestine, hypodermis, neurons and body muscles.

It carries out the reaction L-seryl-[protein] + ATP = O-phospho-L-seryl-[protein] + ADP + H(+). It catalyses the reaction L-threonyl-[protein] + ATP = O-phospho-L-threonyl-[protein] + ADP + H(+). Activated by phosphorylation at Ser-355. May be activated by svh-2-mediated phosphorylation. Serine/threonine-protein kinase which, by phosphorylating and activating mek-1, plays an important role in the activation of the JNK pathway composed of mlk-1, mek-1 and kgb-1. Involved in the response to environmental stress such as heavy metals. By activating the JNK pathway downstream of tyrosine receptor svh-2, plays a role in axon regeneration after injury. The protein is Mitogen-activated protein kinase kinase kinase mlk-1 of Caenorhabditis elegans.